The primary structure comprises 95 residues: Small ribosomal subunit protein bS6 (95 aa).

The protein belongs to the bacterial ribosomal protein bS6 family.

Its function is as follows. Binds together with bS18 to 16S ribosomal RNA. This is Small ribosomal subunit protein bS6 from Desulfitobacterium hafniense (strain DSM 10664 / DCB-2).